The sequence spans 149 residues: Ribosome-binding factor A (149 aa).

It belongs to the RbfA family. As to quaternary structure, monomer. Binds 30S ribosomal subunits, but not 50S ribosomal subunits or 70S ribosomes.

It is found in the cytoplasm. Functionally, one of several proteins that assist in the late maturation steps of the functional core of the 30S ribosomal subunit. Associates with free 30S ribosomal subunits (but not with 30S subunits that are part of 70S ribosomes or polysomes). Required for efficient processing of 16S rRNA. May interact with the 5'-terminal helix region of 16S rRNA. In Caulobacter vibrioides (strain ATCC 19089 / CIP 103742 / CB 15) (Caulobacter crescentus), this protein is Ribosome-binding factor A.